Here is a 365-residue protein sequence, read N- to C-terminus: Carbamoyl phosphate synthase small chain (365 aa).

2 CPSase regions span residues 1-166 (MKRQ…PSPG) and 1-169 (MKRQ…GRGH). L-glutamine is bound by residues Ser-45, Gly-218, and Gly-220. The region spanning 170-357 (RVVLVDFGMK…LTMIENFKKE (188 aa)) is the Glutamine amidotransferase type-1 domain. The Nucleophile role is filled by Cys-245. Residues Leu-246, Gln-249, Asn-287, Gly-289, and Tyr-290 each coordinate L-glutamine. Residues His-330 and Glu-332 contribute to the active site.

The protein belongs to the CarA family. In terms of assembly, composed of two chains; the small (or glutamine) chain promotes the hydrolysis of glutamine to ammonia, which is used by the large (or ammonia) chain to synthesize carbamoyl phosphate. Tetramer of heterodimers (alpha,beta)4.

It carries out the reaction hydrogencarbonate + L-glutamine + 2 ATP + H2O = carbamoyl phosphate + L-glutamate + 2 ADP + phosphate + 2 H(+). The enzyme catalyses L-glutamine + H2O = L-glutamate + NH4(+). It functions in the pathway amino-acid biosynthesis; L-arginine biosynthesis; carbamoyl phosphate from bicarbonate: step 1/1. It participates in pyrimidine metabolism; UMP biosynthesis via de novo pathway; (S)-dihydroorotate from bicarbonate: step 1/3. Its function is as follows. Small subunit of the glutamine-dependent carbamoyl phosphate synthetase (CPSase). CPSase catalyzes the formation of carbamoyl phosphate from the ammonia moiety of glutamine, carbonate, and phosphate donated by ATP, constituting the first step of 2 biosynthetic pathways, one leading to arginine and/or urea and the other to pyrimidine nucleotides. The small subunit (glutamine amidotransferase) binds and cleaves glutamine to supply the large subunit with the substrate ammonia. This is Carbamoyl phosphate synthase small chain from Bacillus cereus (strain ATCC 14579 / DSM 31 / CCUG 7414 / JCM 2152 / NBRC 15305 / NCIMB 9373 / NCTC 2599 / NRRL B-3711).